Reading from the N-terminus, the 346-residue chain is D-alanine--D-alanine ligase A (346 aa).

The region spanning 138–332 (KRLFLAAGVE…FAELCERICR (195 aa)) is the ATP-grasp domain. An ATP-binding site is contributed by 164 to 217 (QLGFPLVVKPNSQGSTVGLSIVHSQAELQPAIELAGRYGDEVMLERFVAGREVT). Residues aspartate 286, glutamate 299, and asparagine 301 each contribute to the Mg(2+) site.

This sequence belongs to the D-alanine--D-alanine ligase family. Requires Mg(2+) as cofactor. Mn(2+) serves as cofactor.

The protein resides in the cytoplasm. The enzyme catalyses 2 D-alanine + ATP = D-alanyl-D-alanine + ADP + phosphate + H(+). It functions in the pathway cell wall biogenesis; peptidoglycan biosynthesis. Functionally, cell wall formation. The protein is D-alanine--D-alanine ligase A of Pseudomonas aeruginosa (strain ATCC 15692 / DSM 22644 / CIP 104116 / JCM 14847 / LMG 12228 / 1C / PRS 101 / PAO1).